The following is a 284-amino-acid chain: F-box only protein 6 (284 aa).

The 48-residue stretch at 1–48 (MVNINELPENILLELFTHVPAPQLLRNCRLVCSLWRDLIDVMTLWKRK) folds into the F-box domain. One can recognise an FBA domain in the interval 69–250 (FYILCSLQRN…VTNSSIIVSH (182 aa)). 5 positions are modified to phosphoserine: Ser249, Ser268, Ser275, Ser278, and Ser283.

In terms of assembly, part of a SCF (SKP1-cullin-F-box) protein ligase complex. Interacts with VCP, CHEK1 and CUL1.

It localises to the cytoplasm. It functions in the pathway protein modification; protein ubiquitination. Its function is as follows. Substrate-recognition component of some SCF (SKP1-CUL1-F-box protein)-type E3 ubiquitin ligase complexes. Involved in endoplasmic reticulum-associated degradation pathway (ERAD) for misfolded lumenal proteins by recognizing and binding sugar chains on unfolded glycoproteins that are retrotranslocated into the cytosol and promoting their ubiquitination and subsequent degradation. Able to recognize and bind denatured glycoproteins, which are modified with not only high-mannose but also complex-type oligosaccharides. Also recognizes sulfated glycans. Also involved in DNA damage response by specifically recognizing activated CHEK1 (phosphorylated on 'Ser-345'), promoting its ubiquitination and degradation. Ubiquitination of CHEK1 is required to ensure that activated CHEK1 does not accumulate as cells progress through S phase, or when replication forks encounter transient impediments during normal DNA replication. This chain is F-box only protein 6 (Fbxo6), found in Rattus norvegicus (Rat).